Consider the following 226-residue polypeptide: Thioredoxin domain-containing protein 9 (226 aa).

One can recognise a Thioredoxin domain in the interval 75–180 (EIGSERDFFQ…TTETLEWRLG (106 aa)). Phosphoserine is present on residues S188, S221, and S223.

In terms of assembly, forms ternary complexes with the chaperonin TCP1 complex, spanning the cylindrical chaperonin cavity and contacting at least 2 subunits.

The protein resides in the cytoplasm. Its subcellular location is the nucleus. The protein localises to the cytoskeleton. It is found in the microtubule organizing center. It localises to the centrosome. The protein resides in the midbody. In terms of biological role, significantly diminishes the chaperonin TCP1 complex ATPase activity, thus negatively impacts protein folding, including that of actin or tubulin. The sequence is that of Thioredoxin domain-containing protein 9 (Txndc9) from Rattus norvegicus (Rat).